Reading from the N-terminus, the 184-residue chain is UPF0149 protein PputGB1_5261 (184 aa).

Belongs to the UPF0149 family.

The protein is UPF0149 protein PputGB1_5261 of Pseudomonas putida (strain GB-1).